Consider the following 332-residue polypeptide: Ribosomal RNA small subunit methyltransferase C (332 aa).

It belongs to the methyltransferase superfamily. RsmC family. Monomer.

The protein resides in the cytoplasm. The catalysed reaction is guanosine(1207) in 16S rRNA + S-adenosyl-L-methionine = N(2)-methylguanosine(1207) in 16S rRNA + S-adenosyl-L-homocysteine + H(+). Its function is as follows. Specifically methylates the guanine in position 1207 of 16S rRNA in the 30S particle. This chain is Ribosomal RNA small subunit methyltransferase C, found in Pseudomonas entomophila (strain L48).